The following is a 750-amino-acid chain: Photosystem I P700 chlorophyll a apoprotein A1 (750 aa).

The next 8 membrane-spanning stretches (helical) occupy residues 70–93, 156–179, 195–219, 291–309, 346–369, 385–411, 433–455, and 531–549; these read VFSAHFGQLSIIFLWLSGMYFHGA, LYCTAIGALVFAALMLFAGWFHYH, LNHHLAGLLGLGSLSWAGHQIHVSL, IAHHHLAIAILFLIAGHMY, WHAQLALNLAMLGSLTIVVAHHMY, LSLFTHHMWIGGFLIVGAAAHAAIFMV, AIISHLNWACIFLGFHSFGLYIH, and FLVHHIHAFTIHVTVLILL. 2 residues coordinate [4Fe-4S] cluster: C573 and C582. 2 helical membrane passes run 589-610 and 664-686; these read HVFLGLFWMYNSISVVIFHFSW and LSAYGLFFLGAHFVWAFSLMFLF. H675 is a chlorophyll a' binding site. 2 residues coordinate chlorophyll a: M683 and Y691. W692 contributes to the phylloquinone binding site. A helical transmembrane segment spans residues 724 to 744; the sequence is AVGVTHYLLGGIATTWAFFLA.

It belongs to the PsaA/PsaB family. The PsaA/B heterodimer binds the P700 chlorophyll special pair and subsequent electron acceptors. PSI consists of a core antenna complex that captures photons, and an electron transfer chain that converts photonic excitation into a charge separation. The eukaryotic PSI reaction center is composed of at least 11 subunits. It depends on P700 is a chlorophyll a/chlorophyll a' dimer, A0 is one or more chlorophyll a, A1 is one or both phylloquinones and FX is a shared 4Fe-4S iron-sulfur center. as a cofactor.

The protein resides in the plastid. It is found in the chloroplast thylakoid membrane. It catalyses the reaction reduced [plastocyanin] + hnu + oxidized [2Fe-2S]-[ferredoxin] = oxidized [plastocyanin] + reduced [2Fe-2S]-[ferredoxin]. Its function is as follows. PsaA and PsaB bind P700, the primary electron donor of photosystem I (PSI), as well as the electron acceptors A0, A1 and FX. PSI is a plastocyanin-ferredoxin oxidoreductase, converting photonic excitation into a charge separation, which transfers an electron from the donor P700 chlorophyll pair to the spectroscopically characterized acceptors A0, A1, FX, FA and FB in turn. Oxidized P700 is reduced on the lumenal side of the thylakoid membrane by plastocyanin. The chain is Photosystem I P700 chlorophyll a apoprotein A1 from Acorus calamus (Sweet flag).